The sequence spans 126 residues: Adenosine 5'-monophosphoramidase HINT1 (126 aa).

An N-acetylalanine modification is found at Ala-2. The 109-residue stretch at 18 to 126 folds into the HIT domain; that stretch reads IFGKIIRKEI…GGRQMHWPPG (109 aa). Residues Lys-21 and Lys-30 each carry the N6-acetyllysine modification. 43-44 contributes to the AMP binding site; it reads DI. Residues Ser-45 and Ser-72 each carry the phosphoserine modification. AMP is bound by residues Asn-99, 105–107, and 112–114; these read GQS and HLH. The Histidine triad motif signature appears at 110 to 114; it reads HVHLH. His-112 (tele-AMP-histidine intermediate) is an active-site residue.

The protein belongs to the HINT family. Homodimer. Interacts with CDK7. Interacts with RUVBL1 and RUVBL2 and is associated with the LEF1/TCF1-CTNNB1 complex and with a KAT5 histone acetyltransferase complex. Identified in a complex with MITF and CTNNB1. Interacts with CDC34 and RBX1, and is part of a SCF (SKP2-CUL1-F-box protein) E3 ubiquitin-protein ligase complex. Interacts with SUMO1, SUMO2 and RGS17. Interacts with the Ten-1 ICD form of TENM1. Interacts with CALM1; interaction increases in the presence of calcium ions. As to expression, widely expressed.

The protein localises to the cytoplasm. Its subcellular location is the nucleus. It carries out the reaction adenosine 5'-phosphoramidate + H2O = AMP + NH4(+). Functionally, exhibits adenosine 5'-monophosphoramidase activity, hydrolyzing purine nucleotide phosphoramidates with a single phosphate group such as adenosine 5'monophosphoramidate (AMP-NH2) to yield AMP and NH2. Hydrolyzes adenosine 5'monophosphomorpholidate (AMP-morpholidate) and guanosine 5'monophosphomorpholidate (GMP-morpholidate). Hydrolyzes lysyl-AMP (AMP-N-epsilon-(N-alpha-acetyl lysine methyl ester)) generated by lysine tRNA ligase, as well as Met-AMP, His-AMP and Asp-AMP, lysyl-GMP (GMP-N-epsilon-(N-alpha-acetyl lysine methyl ester)) and AMP-N-alanine methyl ester. Hydrolyzes 3-indolepropionic acyl-adenylate, tryptamine adenosine phosphoramidate monoester and other fluorogenic purine nucleoside tryptamine phosphoramidates in vitro. Can also convert adenosine 5'-O-phosphorothioate and guanosine 5'-O-phosphorothioate to the corresponding nucleoside 5'-O-phosphates with concomitant release of hydrogen sulfide. In addition, functions as scaffolding protein that modulates transcriptional activation by the LEF1/TCF1-CTNNB1 complex and by the complex formed with MITF and CTNNB1. Modulates p53/TP53 levels and p53/TP53-mediated apoptosis. Modulates proteasomal degradation of target proteins by the SCF (SKP2-CUL1-F-box protein) E3 ubiquitin-protein ligase complex. Also exhibits SUMO-specific isopeptidase activity, deconjugating SUMO1 from RGS17. Deconjugates SUMO1 from RANGAP1. The polypeptide is Adenosine 5'-monophosphoramidase HINT1 (HINT1) (Homo sapiens (Human)).